We begin with the raw amino-acid sequence, 600 residues long: Elongation factor 4 (600 aa).

Residues 5–187 (KYIRNFSIIA…AIINKLPSPK (183 aa)) enclose the tr-type G domain. Residues 17–22 (DHGKST) and 134–137 (NKID) each bind GTP.

It belongs to the TRAFAC class translation factor GTPase superfamily. Classic translation factor GTPase family. LepA subfamily.

The protein localises to the cell inner membrane. The enzyme catalyses GTP + H2O = GDP + phosphate + H(+). Functionally, required for accurate and efficient protein synthesis under certain stress conditions. May act as a fidelity factor of the translation reaction, by catalyzing a one-codon backward translocation of tRNAs on improperly translocated ribosomes. Back-translocation proceeds from a post-translocation (POST) complex to a pre-translocation (PRE) complex, thus giving elongation factor G a second chance to translocate the tRNAs correctly. Binds to ribosomes in a GTP-dependent manner. This chain is Elongation factor 4, found in Rickettsia typhi (strain ATCC VR-144 / Wilmington).